A 312-amino-acid chain; its full sequence is Olfactory receptor 867 (312 aa).

At Met-1 to Asn-6 the chain is on the extracellular side. The helical transmembrane segment at Pro-7–Val-30 threads the bilayer. Topologically, residues Ser-31–Asn-38 are cytoplasmic. The helical transmembrane segment at Leu-39–Pro-60 threads the bilayer. Residues Lys-61–Gln-81 are Extracellular-facing. A disulfide bridge connects residues Cys-78 and Cys-160. A helical transmembrane segment spans residues Val-82 to Cys-101. Residues Asp-102 to Gln-120 lie on the Cytoplasmic side of the membrane. Residues Leu-121–Ile-139 traverse the membrane as a helical segment. Topologically, residues His-140–Asn-177 are extracellular. Asn-148 carries an N-linked (GlcNAc...) asparagine glycan. Residues Val-178–Ser-200 form a helical membrane-spanning segment. Residues Gln-201–Lys-217 lie on the Cytoplasmic side of the membrane. The chain crosses the membrane as a helical span at residues Ala-218–Phe-241. Over Cys-242–Met-253 the chain is Extracellular. Residues Ile-254 to Leu-273 traverse the membrane as a helical segment. Residues Arg-274–Leu-312 lie on the Cytoplasmic side of the membrane.

This sequence belongs to the G-protein coupled receptor 1 family. Epithelium of the tongue; including the taste buds.

Its subcellular location is the cell membrane. Functionally, possible olfactory or taste receptor. The protein is Olfactory receptor 867 (Olr867) of Rattus norvegicus (Rat).